A 466-amino-acid polypeptide reads, in one-letter code: Ribulose bisphosphate carboxylase large chain (466 aa).

Lysine 5 is modified (N6,N6,N6-trimethyllysine). Substrate contacts are provided by asparagine 114 and threonine 164. The Proton acceptor role is filled by lysine 166. Lysine 168 provides a ligand contact to substrate. Positions 192, 194, and 195 each coordinate Mg(2+). Lysine 192 is modified (N6-carboxylysine). The Proton acceptor role is filled by histidine 285. The substrate site is built by arginine 286, histidine 318, and serine 370.

Belongs to the RuBisCO large chain family. Type I subfamily. Heterohexadecamer of 8 large chains and 8 small chains; disulfide-linked. The disulfide link is formed within the large subunit homodimers. Mg(2+) serves as cofactor. In terms of processing, the disulfide bond which can form in the large chain dimeric partners within the hexadecamer appears to be associated with oxidative stress and protein turnover.

It localises to the plastid. The protein resides in the chloroplast. The enzyme catalyses 2 (2R)-3-phosphoglycerate + 2 H(+) = D-ribulose 1,5-bisphosphate + CO2 + H2O. It catalyses the reaction D-ribulose 1,5-bisphosphate + O2 = 2-phosphoglycolate + (2R)-3-phosphoglycerate + 2 H(+). In terms of biological role, ruBisCO catalyzes two reactions: the carboxylation of D-ribulose 1,5-bisphosphate, the primary event in carbon dioxide fixation, as well as the oxidative fragmentation of the pentose substrate in the photorespiration process. Both reactions occur simultaneously and in competition at the same active site. In Caltha palustris (Yellow marsh marigold), this protein is Ribulose bisphosphate carboxylase large chain.